Here is a 228-residue protein sequence, read N- to C-terminus: UPF0758 protein SAB1521c (228 aa).

In terms of domain architecture, MPN spans 102–224; sequence KITQPSDVAD…FTSLVEAGYF (123 aa). Residues histidine 173, histidine 175, and aspartate 186 each coordinate Zn(2+). Residues 173–186 carry the JAMM motif motif; the sequence is HNHPSGDVTPSQED.

Belongs to the UPF0758 family.

This chain is UPF0758 protein SAB1521c, found in Staphylococcus aureus (strain bovine RF122 / ET3-1).